Here is a 256-residue protein sequence, read N- to C-terminus: Thiazole synthase (256 aa).

Lysine 98 serves as the catalytic Schiff-base intermediate with DXP. Residues glycine 159, 185–186 (AG), and 207–208 (NT) contribute to the 1-deoxy-D-xylulose 5-phosphate site.

Belongs to the ThiG family. Homotetramer. Forms heterodimers with either ThiH or ThiS.

The protein localises to the cytoplasm. It catalyses the reaction [ThiS sulfur-carrier protein]-C-terminal-Gly-aminoethanethioate + 2-iminoacetate + 1-deoxy-D-xylulose 5-phosphate = [ThiS sulfur-carrier protein]-C-terminal Gly-Gly + 2-[(2R,5Z)-2-carboxy-4-methylthiazol-5(2H)-ylidene]ethyl phosphate + 2 H2O + H(+). It functions in the pathway cofactor biosynthesis; thiamine diphosphate biosynthesis. Catalyzes the rearrangement of 1-deoxy-D-xylulose 5-phosphate (DXP) to produce the thiazole phosphate moiety of thiamine. Sulfur is provided by the thiocarboxylate moiety of the carrier protein ThiS. In vitro, sulfur can be provided by H(2)S. The protein is Thiazole synthase of Aliivibrio fischeri (strain MJ11) (Vibrio fischeri).